We begin with the raw amino-acid sequence, 576 residues long: MSVACTIRRHIIEKLHVLNIDNFVVTNESILAKLIVDYPNNPDHGDLYTNAALILSKYIKKNPMDIAKILVDEFSSIKEISDINVVKPGFINFNISLDVWYEIIISINRLKEKFGHVNFGNGKRVNIEFVSANPTGPMHIGHARGAIFGDVLANLLERVGYEVVREYYINDAGAQIDVLVESVYLRYKEVLGENIVIGSGLYPGLYLKDIGKLLYQEYDSGLLGMDYSQRRRIIRDVSLMYLMKLIKEDLALLGIKHDIFTSESQLQKDNIVQKCVELLQEKQLIYYGTLDQPKGTEGINWKPRTQMLFKSTDFGDDVDRALQKADGSWTYFANDIAYHFYKISRGFQHMILELGSDHIGYVKRLKAAVKALSDGNATIDIKLHSIVNFLDNGAQVKMSKRSGEFLTIKDVIEKVGKDVVRFIMLTRKSDVVLDFDFAKVVEQSKNNPVFYVQYAHARVHSLIRNAPKILEIELVDFSVLSSKEEILLIKLLAKWQDIVEISAKTAEPHRITFYLIEIAEAFHALWGYGNKSTDMRFIVDNNINLTSARIYLAKSVGYVIASGLTIFSIVPLTEMK.

Residues A132–H142 carry the 'HIGH' region motif.

Belongs to the class-I aminoacyl-tRNA synthetase family. Monomer.

Its subcellular location is the cytoplasm. The catalysed reaction is tRNA(Arg) + L-arginine + ATP = L-arginyl-tRNA(Arg) + AMP + diphosphate. The sequence is that of Arginine--tRNA ligase from Ehrlichia ruminantium (strain Welgevonden).